A 1125-amino-acid polypeptide reads, in one-letter code: tRNA (34-2'-O)-methyltransferase regulator WDR6 (1125 aa).

Position 1 is an N-acetylmethionine (M1). 17 WD repeats span residues 89-130 (SKGL…GNVA), 155-197 (TDRC…PDNK), 207-246 (GHVG…VPGG), 256-294 (GHSA…QAFR), 295-335 (GHQG…YPGL), 346-384 (SRPG…WEQL), 433-475 (LFQG…TGKA), 489-528 (SKQR…FKKP), 567-605 (HGKQ…QPVL), 611-650 (RGMN…KLHI), 652-692 (NCGG…IRPN), 725-765 (EHPD…GAAH), 767-798 (LTAV…HPGL), 860-905 (TRYM…RILH), 912-958 (HHKR…DRGS), 982-1024 (AHSC…PELE), and 1047-1085 (AHAA…PTFM).

Belongs to the WD repeat WDR6 family. Interacts with FTSJ1; the interaction is direct, and required for 2'-O-methylation of position 34 in substrate tRNAs. Interacts with IRS4. Interacts with STK11/LKB1. In terms of tissue distribution, expressed in hypothalamus, hippocampus, cerebrum cortex and cerebellum.

It localises to the cytoplasm. Its function is as follows. Together with methyltransferase FTSJ1, methylates the 2'-O-ribose of nucleotides at position 34 of the tRNA anticodon loop of substrate tRNAs. Required for the correct positioning of the substrate tRNA for methylation. Required to suppress amino acid starvation-induced autophagy. Enhances the STK11/LKB1-induced cell growth suppression activity. The polypeptide is tRNA (34-2'-O)-methyltransferase regulator WDR6 (Wdr6) (Rattus norvegicus (Rat)).